Consider the following 600-residue polypeptide: E3 ubiquitin-protein ligase RLIM (600 aa).

Residue methionine 1 is modified to N-acetylmethionine. Residues methionine 1–serine 11 show a composition bias toward basic and acidic residues. Disordered regions lie at residues methionine 1 to arginine 24, asparagine 49 to glycine 355, and serine 417 to aspartate 497. Polar residues-rich tracts occupy residues serine 103–serine 131 and isoleucine 140–glutamate 152. Serine 163 bears the Phosphoserine mark. A compositionally biased stretch (polar residues) spans asparagine 166 to methionine 175. Residues glutamate 176–proline 187 show a composition bias toward low complexity. Serine 194, serine 227, and serine 229 each carry phosphoserine. Positions arginine 213–arginine 228 are enriched in basic and acidic residues. Over residues leucine 244 to serine 255 the composition is skewed to polar residues. Serine 269 is subject to Phosphoserine. The segment covering serine 288–glycine 306 has biased composition (low complexity). The span at arginine 322–isoleucine 332 shows a compositional bias: basic and acidic residues. The span at alanine 333 to tyrosine 349 shows a compositional bias: polar residues. Positions serine 448 to serine 475 are enriched in low complexity. The segment at cysteine 546–arginine 587 adopts an RING-type zinc-finger fold. The PDZ-binding signature appears at glutamate 597 to valine 600.

Belongs to the RNF12 family. As to quaternary structure, interacts (via N-terminus) with TERF1. Interacts (via C-terminus) with ESR1. Interacts with LIM/homeobox factors such as LHX3. Interacts with LDB1, LDB2 and SIN3A. Interacts with LIMK1.

It localises to the nucleus. The enzyme catalyses S-ubiquitinyl-[E2 ubiquitin-conjugating enzyme]-L-cysteine + [acceptor protein]-L-lysine = [E2 ubiquitin-conjugating enzyme]-L-cysteine + N(6)-ubiquitinyl-[acceptor protein]-L-lysine.. Its pathway is protein modification; protein ubiquitination. Functionally, E3 ubiquitin-protein ligase that acts as a negative coregulator for LIM homeodomain transcription factors by mediating the ubiquitination and subsequent degradation of LIM cofactors LDB1 and LDB2 and by mediating the recruitment the SIN3a/histone deacetylase corepressor complex. Ubiquitination and degradation of LIM cofactors LDB1 and LDB2 allows DNA-bound LIM homeodomain transcription factors to interact with other protein partners such as RLIM. Plays a role in telomere length-mediated growth suppression by mediating the ubiquitination and degradation of TERF1. By targeting ZFP42 for degradation, acts as an activator of random inactivation of X chromosome in the embryo, a stochastic process in which one X chromosome is inactivated to minimize sex-related dosage differences of X-encoded genes in somatic cells of female placental mammals. The polypeptide is E3 ubiquitin-protein ligase RLIM (Rlim) (Mus musculus (Mouse)).